Here is a 213-residue protein sequence, read N- to C-terminus: Urease accessory protein UreE (213 aa).

Residues 170–213 (EHHGRSHSHSHSHSHDHDHDHDHDHDHDHQHGPSCSHGHGHGHR) form a disordered region. Positions 182 to 200 (HSHDHDHDHDHDHDHDHQH) are enriched in basic and acidic residues.

The protein belongs to the UreE family.

It localises to the cytoplasm. Involved in urease metallocenter assembly. Binds nickel. Probably functions as a nickel donor during metallocenter assembly. The protein is Urease accessory protein UreE of Burkholderia thailandensis (strain ATCC 700388 / DSM 13276 / CCUG 48851 / CIP 106301 / E264).